A 340-amino-acid polypeptide reads, in one-letter code: HPr kinase/phosphorylase (340 aa).

Catalysis depends on residues H153 and K174. 168-175 provides a ligand contact to ATP; that stretch reads GRSGIGKS. Residue S175 coordinates Mg(2+). The active-site Proton acceptor; for phosphorylation activity. Proton donor; for dephosphorylation activity is the D192. Positions 216–225 are important for the catalytic mechanism of both phosphorylation and dephosphorylation; it reads MEIRGLGIID. Position 217 (E217) interacts with Mg(2+). R258 is an active-site residue. Residues 279–284 are important for the catalytic mechanism of dephosphorylation; the sequence is PIYPGK.

It belongs to the HPrK/P family. Homohexamer. Mg(2+) is required as a cofactor.

The catalysed reaction is [HPr protein]-L-serine + ATP = [HPr protein]-O-phospho-L-serine + ADP + H(+). It catalyses the reaction [HPr protein]-O-phospho-L-serine + phosphate + H(+) = [HPr protein]-L-serine + diphosphate. Functionally, catalyzes the ATP- as well as the pyrophosphate-dependent phosphorylation of a specific serine residue in HPr, a phosphocarrier protein of the phosphoenolpyruvate-dependent sugar phosphotransferase system (PTS). HprK/P also catalyzes the pyrophosphate-producing, inorganic phosphate-dependent dephosphorylation (phosphorolysis) of seryl-phosphorylated HPr (P-Ser-HPr). This chain is HPr kinase/phosphorylase, found in Chloroherpeton thalassium (strain ATCC 35110 / GB-78).